A 290-amino-acid polypeptide reads, in one-letter code: Expansin-A26 (290 aa).

The first 29 residues, 1–29, serve as a signal peptide directing secretion; it reads MDTTTTMAPLPLLTTTSLLLFFFLASSFA. Positions 45-67 are disordered; the sequence is DGGGDGEGGGGGDGEGGGGGGGA. In terms of domain architecture, Expansin-like EG45 spans 101–196; it reads GGACGYKDAD…RKVACVRQGG (96 aa). Positions 206–286 constitute an Expansin-like CBD domain; it reads SYNMVMVKNV…DWTYDNTYQA (81 aa). Asparagine 250 is a glycosylation site (N-linked (GlcNAc...) asparagine).

The protein belongs to the expansin family. Expansin A subfamily. As to expression, expressed in flowers.

Its subcellular location is the secreted. The protein localises to the cell wall. It localises to the membrane. Its function is as follows. May cause loosening and extension of plant cell walls by disrupting non-covalent bonding between cellulose microfibrils and matrix glucans. No enzymatic activity has been found. May be required for rapid internodal elongation in deepwater rice during submergence. The sequence is that of Expansin-A26 (EXPA26) from Oryza sativa subsp. japonica (Rice).